An 88-amino-acid chain; its full sequence is Small ribosomal subunit protein uS17 (88 aa).

Belongs to the universal ribosomal protein uS17 family. Part of the 30S ribosomal subunit.

Its function is as follows. One of the primary rRNA binding proteins, it binds specifically to the 5'-end of 16S ribosomal RNA. The sequence is that of Small ribosomal subunit protein uS17 from Dechloromonas aromatica (strain RCB).